The sequence spans 205 residues: Dephospho-CoA kinase (205 aa).

Positions 3–204 (KVGLTGGIGA…HRAHQPGESQ (202 aa)) constitute a DPCK domain. 11–16 (GAGKSE) contributes to the ATP binding site.

This sequence belongs to the CoaE family.

The protein resides in the cytoplasm. It catalyses the reaction 3'-dephospho-CoA + ATP = ADP + CoA + H(+). Its pathway is cofactor biosynthesis; coenzyme A biosynthesis; CoA from (R)-pantothenate: step 5/5. In terms of biological role, catalyzes the phosphorylation of the 3'-hydroxyl group of dephosphocoenzyme A to form coenzyme A. The sequence is that of Dephospho-CoA kinase from Streptomyces avermitilis (strain ATCC 31267 / DSM 46492 / JCM 5070 / NBRC 14893 / NCIMB 12804 / NRRL 8165 / MA-4680).